We begin with the raw amino-acid sequence, 568 residues long: Sulfite reductase [NADPH] hemoprotein beta-component (568 aa).

[4Fe-4S] cluster contacts are provided by C425, C431, C470, and C474. C474 contacts siroheme.

It belongs to the nitrite and sulfite reductase 4Fe-4S domain family. In terms of assembly, alpha(8)-beta(8). The alpha component is a flavoprotein, the beta component is a hemoprotein. Siroheme is required as a cofactor. Requires [4Fe-4S] cluster as cofactor.

It catalyses the reaction hydrogen sulfide + 3 NADP(+) + 3 H2O = sulfite + 3 NADPH + 4 H(+). The protein operates within sulfur metabolism; hydrogen sulfide biosynthesis; hydrogen sulfide from sulfite (NADPH route): step 1/1. In terms of biological role, component of the sulfite reductase complex that catalyzes the 6-electron reduction of sulfite to sulfide. This is one of several activities required for the biosynthesis of L-cysteine from sulfate. This chain is Sulfite reductase [NADPH] hemoprotein beta-component, found in Xanthomonas oryzae pv. oryzae (strain MAFF 311018).